The following is a 372-amino-acid chain: Pluviatolide O-methyltransferase (372 aa).

5 residues coordinate S-adenosyl-L-homocysteine: glycine 214, aspartate 237, aspartate 257, methionine 258, and lysine 271. The Proton acceptor role is filled by histidine 275. Active-site residues include aspartate 306 and glutamate 338.

Belongs to the class I-like SAM-binding methyltransferase superfamily. Cation-independent O-methyltransferase family. COMT subfamily. In terms of assembly, homodimer. As to expression, mostly expressed in stems, and, to a lower extent, in leaves.

It carries out the reaction (-)-pluviatolide + S-adenosyl-L-methionine = (-)-bursehernin + S-adenosyl-L-homocysteine + H(+). The protein operates within aromatic compound metabolism; phenylpropanoid biosynthesis. In terms of biological role, O-methyltransferase involved in the biosynthesis of etoposide, a chemotherapeutic compound of the topoisomerase inhibitor family. Catalyzes the methylation of (-)-pluviatolide to produce (-)-bursehernin. This Sinopodophyllum hexandrum (Himalayan may apple) protein is Pluviatolide O-methyltransferase.